A 119-amino-acid polypeptide reads, in one-letter code: C-C motif chemokine 24 (119 aa).

The signal sequence occupies residues 1-26 (MAGLATFVVSLLLVTLCAHCIDPAGS). Cystine bridges form between Cys-33-Cys-58 and Cys-34-Cys-74. N-linked (GlcNAc...) asparagine glycosylation is found at Asn-54 and Asn-115.

Belongs to the intercrine beta (chemokine CC) family.

The protein localises to the secreted. Functionally, chemotactic for resting T-lymphocytes, and eosinophils. Has lower chemotactic activity for neutrophils but none for monocytes and activated lymphocytes. Is a strong suppressor of colony formation by a multipotential hematopoietic progenitor cell line. Binds to CCR3. The chain is C-C motif chemokine 24 from Canis lupus familiaris (Dog).